The chain runs to 327 residues: Immunodominant envelope protein p35 (327 aa).

Residues 41–69 are disordered; it reads KNGYDDYRDPPSPKPLPKSKQEPNADDKV. Residues 59 to 69 show a composition bias toward basic and acidic residues; that stretch reads SKQEPNADDKV. A helical transmembrane segment spans residues 291–311; the sequence is ITMMFLIAIVIIIGLAIFDIN.

The protein belongs to the poxviruses protein p35 family.

It localises to the virion membrane. Its function is as follows. Envelope protein that binds to the cell surface to provide virion attachment to target cell. The polypeptide is Immunodominant envelope protein p35 (Fowlpox virus (strain NVSL) (FPV)).